We begin with the raw amino-acid sequence, 145 residues long: Transcriptional regulator ZitR (145 aa).

The region spanning 1-142 (MSLANQIDQF…ISQFLSVLTE (142 aa)) is the HTH marR-type domain. Glu23, Cys29, Glu40, and His41 together coordinate Zn(2+). The H-T-H motif DNA-binding region spans 53–76 (NARIAEQLKISPAAVTKALKKLQE). Positions 106, 107, and 111 each coordinate Zn(2+).

In terms of assembly, homodimer.

Zinc acts as a corepressor and is required for DNA-binding activity. Binds up to two zinc ligands per monomer. Inactive under zinc deprivation. Zinc-responsive regulator that represses expression of the zit operon in the presence of zinc. Acts by binding two palindromic operator sites overlapping the -35 and -10 boxes of the zit promoter. Could be a sensitive sensor of intracellular zinc to efficiently respond to zinc variations in the environment. The protein is Transcriptional regulator ZitR (zitR) of Lactococcus lactis subsp. cremoris (strain MG1363).